The following is a 414-amino-acid chain: Tyrosine--tRNA ligase (414 aa).

Residue Y40 participates in L-tyrosine binding. The 'HIGH' region motif lies at 45–54 (ATAASLHVGH). L-tyrosine contacts are provided by Y175 and Q179. The 'KMSKS' region signature appears at 235 to 239 (KMGKS). K238 serves as a coordination point for ATP. In terms of domain architecture, S4 RNA-binding spans 349-414 (LTVVQLLAQT…KKKHRMVQLG (66 aa)).

This sequence belongs to the class-I aminoacyl-tRNA synthetase family. TyrS type 1 subfamily. Homodimer.

It is found in the cytoplasm. It carries out the reaction tRNA(Tyr) + L-tyrosine + ATP = L-tyrosyl-tRNA(Tyr) + AMP + diphosphate + H(+). Its function is as follows. Catalyzes the attachment of tyrosine to tRNA(Tyr) in a two-step reaction: tyrosine is first activated by ATP to form Tyr-AMP and then transferred to the acceptor end of tRNA(Tyr). This chain is Tyrosine--tRNA ligase, found in Paracoccus denitrificans (strain Pd 1222).